The sequence spans 64 residues: Large ribosomal subunit protein bL35 (64 aa).

It belongs to the bacterial ribosomal protein bL35 family.

This chain is Large ribosomal subunit protein bL35, found in Acinetobacter baumannii (strain AB307-0294).